We begin with the raw amino-acid sequence, 206 residues long: Large ribosomal subunit protein uL4 (206 aa).

The segment at 48–97 is disordered; it reads THAVKNRSLVSGGGKKPWKQKHTGRARQGSTRASQWVGGGKAMGPKPRDY. Over residues 63-72 the composition is skewed to basic residues; sequence KPWKQKHTGR.

This sequence belongs to the universal ribosomal protein uL4 family. Part of the 50S ribosomal subunit.

Its function is as follows. One of the primary rRNA binding proteins, this protein initially binds near the 5'-end of the 23S rRNA. It is important during the early stages of 50S assembly. It makes multiple contacts with different domains of the 23S rRNA in the assembled 50S subunit and ribosome. Forms part of the polypeptide exit tunnel. This Anaeromyxobacter sp. (strain K) protein is Large ribosomal subunit protein uL4.